The sequence spans 429 residues: Ribosomal RNA small subunit methyltransferase B (429 aa).

S-adenosyl-L-methionine is bound by residues 254–260 (CAAPGGK), Asp-277, Asp-303, and Asp-322. The active-site Nucleophile is the Cys-375.

Belongs to the class I-like SAM-binding methyltransferase superfamily. RsmB/NOP family.

It is found in the cytoplasm. The enzyme catalyses cytidine(967) in 16S rRNA + S-adenosyl-L-methionine = 5-methylcytidine(967) in 16S rRNA + S-adenosyl-L-homocysteine + H(+). Functionally, specifically methylates the cytosine at position 967 (m5C967) of 16S rRNA. The chain is Ribosomal RNA small subunit methyltransferase B from Pectobacterium carotovorum subsp. carotovorum (strain PC1).